The following is a 118-amino-acid chain: MKQAIREKVKKKRRREKNTSGKYKGLYILFRLAADDFTYSAFFYLSKRSKEEHTTSAANLHPRKKKRMPPRRAEKNKAPNHHPSFFLRVIPATFVLPDNILIILCSDSDLFFVAEAIS.

The disordered stretch occupies residues Ser-49–Asn-80. Residues His-61–Pro-70 show a composition bias toward basic residues.

This is an uncharacterized protein from Saccharomyces cerevisiae (strain ATCC 204508 / S288c) (Baker's yeast).